We begin with the raw amino-acid sequence, 99 residues long: Plastocyanin (99 aa).

Positions 1–99 (LDVLLGSDDG…AGMVGKVTVN (99 aa)) constitute a Plastocyanin-like domain. H37, C84, H87, and M92 together coordinate Cu cation.

This sequence belongs to the plastocyanin family. Cu(2+) is required as a cofactor.

The protein resides in the plastid. It is found in the chloroplast thylakoid membrane. Functionally, participates in electron transfer between P700 and the cytochrome b6-f complex in photosystem I. This chain is Plastocyanin (PETE), found in Mercurialis perennis (Dog's mercury).